Consider the following 215-residue polypeptide: Ribose-5-phosphate isomerase A (215 aa).

Substrate contacts are provided by residues 26-29 (TGST), 79-82 (DGAD), and 92-95 (KGGG). The active-site Proton acceptor is the E101. Position 119 (K119) interacts with substrate.

It belongs to the ribose 5-phosphate isomerase family. As to quaternary structure, homodimer.

It carries out the reaction aldehydo-D-ribose 5-phosphate = D-ribulose 5-phosphate. Its pathway is carbohydrate degradation; pentose phosphate pathway; D-ribose 5-phosphate from D-ribulose 5-phosphate (non-oxidative stage): step 1/1. In terms of biological role, catalyzes the reversible conversion of ribose-5-phosphate to ribulose 5-phosphate. This Xanthomonas oryzae pv. oryzae (strain PXO99A) protein is Ribose-5-phosphate isomerase A.